The sequence spans 603 residues: Myotubularin (603 aa).

The segment covering 1–13 (MASAPTSKYNSHS) has biased composition (polar residues). The segment at 1 to 32 (MASAPTSKYNSHSLENESIKRTSRDGVNRDVG) is disordered. 2 positions are modified to phosphoserine: Ser13 and Ser18. Positions 14 to 32 (LENESIKRTSRDGVNRDVG) are enriched in basic and acidic residues. The GRAM domain occupies 29–97 (RDVGETLPRL…GVISRIEKMG (69 aa)). The region spanning 163–538 (GWTVYNPVEE…RHLELWVNYY (376 aa)) is the Myotubularin phosphatase domain. Asn288, Asn313, and Ile314 together coordinate a 1,2-diacyl-sn-glycero-3-phospho-(1D-myo-inositol-3,5-bisphosphate). Positions 288, 313, and 314 each coordinate a 1,2-diacyl-sn-glycero-3-phospho-(1D-myo-inositol-3-phosphate). Cys375 acts as the Phosphocysteine intermediate in catalysis. 8 residues coordinate a 1,2-diacyl-sn-glycero-3-phospho-(1D-myo-inositol-3,5-bisphosphate): Ser376, Asp377, Gly378, Trp379, Asp380, Arg381, Lys417, and Arg421. Residues Ser376, Asp377, Gly378, Trp379, Asp380, and Arg381 each contribute to the a 1,2-diacyl-sn-glycero-3-phospho-(1D-myo-inositol-3-phosphate) site. Arg421 serves as a coordination point for a 1,2-diacyl-sn-glycero-3-phospho-(1D-myo-inositol-3-phosphate). Thr495 bears the Phosphothreonine mark. Positions 580 to 603 (AKLSDPSASPSSPSQMMPHVQTHF) are disordered. Over residues 583–593 (SDPSASPSSPS) the composition is skewed to low complexity. Ser588 carries the post-translational modification Phosphoserine.

Belongs to the protein-tyrosine phosphatase family. Non-receptor class myotubularin subfamily. Heterodimer with MTMR12. Interacts with KMT2A/MLL1 (via SET domain). Interacts with DES in skeletal muscle but not in cardiac muscle. Interacts with SPEG.

The protein resides in the cytoplasm. Its subcellular location is the cell membrane. It is found in the cell projection. The protein localises to the filopodium. It localises to the ruffle. The protein resides in the late endosome. Its subcellular location is the myofibril. It is found in the sarcomere. It catalyses the reaction a 1,2-diacyl-sn-glycero-3-phospho-(1D-myo-inositol-3-phosphate) + H2O = a 1,2-diacyl-sn-glycero-3-phospho-(1D-myo-inositol) + phosphate. It carries out the reaction a 1,2-diacyl-sn-glycero-3-phospho-(1D-myo-inositol-3,5-bisphosphate) + H2O = a 1,2-diacyl-sn-glycero-3-phospho-(1D-myo-inositol-5-phosphate) + phosphate. The catalysed reaction is 1,2-dioctanoyl-sn-glycero-3-phospho-(1-D-myo-inositol-3-phosphate) + H2O = 1,2-dioctanoyl-sn-glycero-3-phospho-(1D-myo-inositol) + phosphate. The enzyme catalyses 1,2-dioctanoyl-sn-glycero-3-phospho-(1D-myo-inositol-3,5-bisphosphate) + H2O = 1,2-dioctanoyl-sn-glycero-3-phospho-(1D-myo-inositol-5-phosphate) + phosphate. It catalyses the reaction 1,2-dihexadecanoyl-sn-glycero-3-phospho-(1D-myo-inositol-3,5-phosphate) + H2O = 1,2-dihexadecanoyl-sn-glycero-3-phospho-(1D-myo-inositol-5-phosphate) + phosphate. With respect to regulation, allosterically activated by phosphatidylinositol 5-phosphate (PI5P). Its function is as follows. Lipid phosphatase which dephosphorylates phosphatidylinositol 3-monophosphate (PI3P) and phosphatidylinositol 3,5-bisphosphate (PI(3,5)P2). Has also been shown to dephosphorylate phosphotyrosine- and phosphoserine-containing peptides. Negatively regulates EGFR degradation through regulation of EGFR trafficking from the late endosome to the lysosome. Plays a role in vacuolar formation and morphology. Regulates desmin intermediate filament assembly and architecture. Plays a role in mitochondrial morphology and positioning. Required for skeletal muscle maintenance but not for myogenesis. In skeletal muscles, stabilizes MTMR12 protein levels. In Bos taurus (Bovine), this protein is Myotubularin.